The chain runs to 385 residues: tRNA-specific 2-thiouridylase MnmA (385 aa).

Residues glycine 29 to serine 36 and leucine 55 contribute to the ATP site. The active-site Nucleophile is cysteine 116. Residues cysteine 116 and cysteine 225 are joined by a disulfide bond. ATP is bound at residue glycine 141. Positions lysine 175–glutamine 177 are interaction with tRNA. Catalysis depends on cysteine 225, which acts as the Cysteine persulfide intermediate. An interaction with tRNA region spans residues arginine 330–tyrosine 331.

This sequence belongs to the MnmA/TRMU family.

It localises to the cytoplasm. It carries out the reaction S-sulfanyl-L-cysteinyl-[protein] + uridine(34) in tRNA + AH2 + ATP = 2-thiouridine(34) in tRNA + L-cysteinyl-[protein] + A + AMP + diphosphate + H(+). In terms of biological role, catalyzes the 2-thiolation of uridine at the wobble position (U34) of tRNA, leading to the formation of s(2)U34. The sequence is that of tRNA-specific 2-thiouridylase MnmA from Prochlorococcus marinus (strain AS9601).